We begin with the raw amino-acid sequence, 450 residues long: UDP-N-acetylmuramoylalanine--D-glutamate ligase (450 aa).

115-121 (GTNGKTT) is an ATP binding site.

This sequence belongs to the MurCDEF family.

It is found in the cytoplasm. It catalyses the reaction UDP-N-acetyl-alpha-D-muramoyl-L-alanine + D-glutamate + ATP = UDP-N-acetyl-alpha-D-muramoyl-L-alanyl-D-glutamate + ADP + phosphate + H(+). The protein operates within cell wall biogenesis; peptidoglycan biosynthesis. Functionally, cell wall formation. Catalyzes the addition of glutamate to the nucleotide precursor UDP-N-acetylmuramoyl-L-alanine (UMA). The chain is UDP-N-acetylmuramoylalanine--D-glutamate ligase from Lachnospira eligens (strain ATCC 27750 / DSM 3376 / VPI C15-48 / C15-B4) (Eubacterium eligens).